Consider the following 118-residue polypeptide: Small ribosomal subunit protein uS13 (118 aa).

The tract at residues 93-118 is disordered; it reads RNLPVRGQNTKNNARTRKGPTRPLKR. Basic residues predominate over residues 106-118; sequence ARTRKGPTRPLKR.

This sequence belongs to the universal ribosomal protein uS13 family. In terms of assembly, part of the 30S ribosomal subunit. Forms a loose heterodimer with protein S19. Forms two bridges to the 50S subunit in the 70S ribosome.

In terms of biological role, located at the top of the head of the 30S subunit, it contacts several helices of the 16S rRNA. In the 70S ribosome it contacts the 23S rRNA (bridge B1a) and protein L5 of the 50S subunit (bridge B1b), connecting the 2 subunits; these bridges are implicated in subunit movement. Contacts the tRNAs in the A and P-sites. The polypeptide is Small ribosomal subunit protein uS13 (Psychrobacter cryohalolentis (strain ATCC BAA-1226 / DSM 17306 / VKM B-2378 / K5)).